Reading from the N-terminus, the 274-residue chain is Proteasome subunit beta type-7-B (274 aa).

The propeptide at 1 to 37 (MSQSSVDIPPKGGFSFDLCKRNDMLTQKGLKAPSFLK) is removed in mature form. Threonine 40 acts as the Nucleophile in catalysis.

Belongs to the peptidase T1B family. As to quaternary structure, component of the 20S core complex of the 26S proteasome. The 26S proteasome is composed of a core protease (CP), known as the 20S proteasome, capped at one or both ends by the 19S regulatory particle (RP/PA700). The 20S proteasome core is composed of 28 subunits that are arranged in four stacked rings, resulting in a barrel-shaped structure. The two end rings are each formed by seven alpha subunits, and the two central rings are each formed by seven beta subunits. The catalytic chamber with the active sites is on the inside of the barrel.

Its subcellular location is the cytoplasm. The protein localises to the nucleus. The catalysed reaction is Cleavage of peptide bonds with very broad specificity.. In terms of biological role, the proteasome is a multicatalytic proteinase complex which is characterized by its ability to cleave peptides with Arg, Phe, Tyr, Leu, and Glu adjacent to the leaving group at neutral or slightly basic pH. The proteasome has an ATP-dependent proteolytic activity. This chain is Proteasome subunit beta type-7-B (PBB2), found in Arabidopsis thaliana (Mouse-ear cress).